Here is a 381-residue protein sequence, read N- to C-terminus: Tafazzin (381 aa).

Over 1–25 (MSFRDVLERGDEFLEAYPRRSPLWR) the chain is Mitochondrial intermembrane. Residues 26-47 (FLSYSTSLLTFGVSKLLLFTCY) lie within the membrane without spanning it. Topologically, residues 48-381 (NVKLNGFEKL…PEGKPKGKDD (334 aa)) are mitochondrial intermembrane. An HXXXXD motif motif is present at residues 77-82 (HMSMVD). The segment at 215–232 (LEATKPPIVVPIFATGFE) is required for membrane insertion.

Belongs to the taffazin family.

It localises to the mitochondrion outer membrane. The protein localises to the mitochondrion inner membrane. The enzyme catalyses 1'-[1,2-diacyl-sn-glycero-3-phospho],3'-[1-acyl-sn-glycero-3-phospho]-glycerol + a 1,2-diacyl-sn-glycero-3-phosphocholine = a cardiolipin + a 1-acyl-sn-glycero-3-phosphocholine. It carries out the reaction 1,2-di-(9Z,12Z-octadecadienoyl)-sn-glycero-3-phosphocholine + 1'-[1,2-di-(9Z,12Z-octadecadienoyl)-sn-glycero-3-phospho]-3'-[1-(9Z,12Z-octadecadienoyl)-sn-glycero-3-phospho]-glycerol = 1-(9Z,12Z)-octadecadienoyl-sn-glycero-3-phosphocholine + 1',3'-bis-[1,2-di-(9Z,12Z-octadecadienoyl)-sn-glycero-3-phospho]-glycerol. The catalysed reaction is 1'-[1,2-di-(9Z-octadecenoyl)-sn-glycero-3-phospho]-3'-[1-(9Z-octadecenoyl)-2-hexadecanoyl-sn-glycero-3-phospho]-glycerol + 1-hexadecanoyl-sn-glycero-3-phosphocholine = 1'-[1,2-di-(9Z-octadecenoyl)-sn-glycero-3-phospho]-3'-[1-(9Z-octadecenoyl)-sn-glycero-3-phospho]-glycerol + 1,2-dihexadecanoyl-sn-glycero-3-phosphocholine. It catalyses the reaction 1'-[1,2-di-(9Z-octadecenoyl)-sn-glycero-3-phospho]-3'-[1-(9Z-octadecenoyl)-2-(9Z-hexadecenoyl)-sn-glycero-3-phospho]-glycerol + 1-(9Z-hexadecenoyl)-sn-glycero-3-phosphocholine = 1,2-di-(9Z-hexadecenoyl)-sn-glycero-3-phosphocholine + 1'-[1,2-di-(9Z-octadecenoyl)-sn-glycero-3-phospho]-3'-[1-(9Z-octadecenoyl)-sn-glycero-3-phospho]-glycerol. The enzyme catalyses 1',3'-bis[1,2-di-(9Z-octadecenoyl)-sn-glycero-3-phospho]-glycerol + 1-(9Z-octadecenoyl)-sn-glycero-3-phosphocholine = 1'-[1,2-di-(9Z-octadecenoyl)-sn-glycero-3-phospho]-3'-[1-(9Z-octadecenoyl)-sn-glycero-3-phospho]-glycerol + 1,2-di-(9Z-octadecenoyl)-sn-glycero-3-phosphocholine. It carries out the reaction 1'-[1,2-di-(9Z-octadecenoyl)-sn-glycero-3-phospho]-3'-[1-(9Z-octadecenoyl)-2-(9Z,12Z-octadecadienoyl)-sn-glycero-3-phospho]-glycerol + 1-(9Z,12Z)-octadecadienoyl-sn-glycero-3-phosphocholine = 1,2-di-(9Z,12Z-octadecadienoyl)-sn-glycero-3-phosphocholine + 1'-[1,2-di-(9Z-octadecenoyl)-sn-glycero-3-phospho]-3'-[1-(9Z-octadecenoyl)-sn-glycero-3-phospho]-glycerol. The catalysed reaction is 1'-[1,2-di-(9Z-octadecenoyl)-sn-glycero-3-phospho]-3'-[1-(9Z-octadecenoyl)-2-(9Z-hexadecenoyl)-sn-glycero-3-phospho]-glycerol + 1-hexadecanoyl-sn-glycero-3-phosphocholine = 1-hexadecanoyl-2-(9Z-hexadecenoyl)-sn-glycero-3-phosphocholine + 1'-[1,2-di-(9Z-octadecenoyl)-sn-glycero-3-phospho]-3'-[1-(9Z-octadecenoyl)-sn-glycero-3-phospho]-glycerol. It catalyses the reaction 1'-[1,2-di-(9Z-octadecenoyl)-sn-glycero-3-phospho]-3'-[1-(9Z-octadecenoyl)-2-hexadecanoyl-sn-glycero-3-phospho]-glycerol + 1-(9Z-hexadecenoyl)-sn-glycero-3-phosphocholine = 1-(9Z-hexadecenoyl)-2-hexadecanoyl-sn-glycero-3-phosphocholine + 1'-[1,2-di-(9Z-octadecenoyl)-sn-glycero-3-phospho]-3'-[1-(9Z-octadecenoyl)-sn-glycero-3-phospho]-glycerol. The enzyme catalyses 2 1'-[1,2-diacyl-sn-glycero-3-phospho],3'-[1-acyl-sn-glycero-3-phospho]-glycerol = 1',3'-bis-[1-acyl-sn-glycero-3-phospho]-glycerol + a cardiolipin. It carries out the reaction 2 1'-[1,2-di-(9Z-octadecenoyl)-sn-glycero-3-phospho]-3'-[1-(9Z-octadecenoyl)-sn-glycero-3-phospho]-glycerol = 1',3'-bis-[1-(9Z-octadecenoyl)-sn-glycero-3-phospho]-glycerol + 1',3'-bis[1,2-di-(9Z-octadecenoyl)-sn-glycero-3-phospho]-glycerol. The catalysed reaction is 1,2-di-(9Z-hexadecenoyl)-sn-glycero-3-phosphocholine + 1-hexadecanoyl-sn-glycero-3-phosphocholine = 1-hexadecanoyl-2-(9Z-hexadecenoyl)-sn-glycero-3-phosphocholine + 1-(9Z-hexadecenoyl)-sn-glycero-3-phosphocholine. It catalyses the reaction 1'-[1,2-di-(9Z,12Z-octadecadienoyl)-sn-glycero-3-phospho]-3'-[1-(9Z,12Z-octadecadienoyl)-sn-glycero-3-phospho]-glycerol + 1,2-di-(9Z-octadecenoyl)-sn-glycero-3-phosphocholine = 1'-[1,2-di-(9Z,12Z-octadecadienoyl)-sn-glycero-3-phospho]-3'-[1-(9Z,12Z-octadecadienoyl)-2-(9Z-octadecenoyl)-sn-glycero-3-phospho]-glycerol + 1-(9Z-octadecenoyl)-sn-glycero-3-phosphocholine. Its pathway is phospholipid metabolism. Its function is as follows. Acyltransferase required to remodel newly synthesized phospholipid cardiolipin (1',3'-bis-[1,2-diacyl-sn-glycero-3-phospho]-glycerol or CL), a key component of the mitochondrial inner membrane, with tissue specific acyl chains necessary for adequate mitochondrial function. Its role in cellular physiology is to improve mitochondrial performance. CL is critical for the coassembly of lipids and proteins in mitochondrial membranes, for instance, remodeling of the acyl groups of CL in the mitochondrial inner membrane affects the assembly and stability of respiratory chain complex IV and its supercomplex forms. Catalyzes the transacylation between phospholipids and lysophospholipids, with the highest rate being between phosphatidylcholine (1,2-diacyl-sn-glycero-3-phosphocholine or PC) and CL. Catalyzes both 1-acyl-sn-glycero-3-phosphocholine (lysophosphatidylcholine or LPC) reacylation and PC-CL transacylation, that means, it exchanges acyl groups between CL and PC by a combination of forward and reverse transacylations. Also catalyzes transacylations between other phospholipids such as phosphatidylethanolamine (1,2-diacyl-sn-glycero-3-phosphoethanolamine or PE) and CL, between PC and PE, and between PC and phosphatidate (1,2-diacyl-sn-glycero-3-phosphate or PA), although at lower rate. Not regiospecific, it transfers acyl groups into any of the sn-1 and sn-2 positions of the monolysocardiolipin (MLCL), which is an important prerequisite for uniformity and symmetry in CL acyl distribution. Cannot transacylate dilysocardiolipin (DLCL), thus, the role of MLCL is limited to that of an acyl acceptor. CoA-independent, it can reshuffle molecular species within a single phospholipid class. Redistributes fatty acids between MLCL, CL, and other lipids, which prolongs the half-life of CL. Its action is completely reversible, which allows for cyclic changes, such as fission and fusion or bending and flattening of the membrane. Hence, by contributing to the flexibility of the lipid composition, it plays an important role in the dynamics of mitochondria membranes. Essential for the final stage of spermatogenesis, spermatid individualization. Required for the initiation of mitophagy. The protein is Tafazzin (TAZ1) of Saccharomyces cerevisiae (strain ATCC 204508 / S288c) (Baker's yeast).